The following is a 539-amino-acid chain: Probable methionine--tRNA ligase, mitochondrial (539 aa).

Positions 28–38 match the 'HIGH' region motif; that stretch reads FYVNAAPHLGH. The short motif at 326 to 330 is the 'KMSKS' region element; the sequence is KMSKS. Position 329 (K329) interacts with ATP.

The protein belongs to the class-I aminoacyl-tRNA synthetase family.

It is found in the mitochondrion matrix. The catalysed reaction is tRNA(Met) + L-methionine + ATP = L-methionyl-tRNA(Met) + AMP + diphosphate. The chain is Probable methionine--tRNA ligase, mitochondrial from Schizosaccharomyces pombe (strain 972 / ATCC 24843) (Fission yeast).